A 171-amino-acid chain; its full sequence is Adenine phosphoribosyltransferase (171 aa).

It belongs to the purine/pyrimidine phosphoribosyltransferase family. In terms of assembly, homodimer.

Its subcellular location is the cytoplasm. It carries out the reaction AMP + diphosphate = 5-phospho-alpha-D-ribose 1-diphosphate + adenine. It functions in the pathway purine metabolism; AMP biosynthesis via salvage pathway; AMP from adenine: step 1/1. Catalyzes a salvage reaction resulting in the formation of AMP, that is energically less costly than de novo synthesis. In Citrifermentans bemidjiense (strain ATCC BAA-1014 / DSM 16622 / JCM 12645 / Bem) (Geobacter bemidjiensis), this protein is Adenine phosphoribosyltransferase.